Reading from the N-terminus, the 308-residue chain is Glycerol-3-phosphate dehydrogenase [NAD(P)+] (308 aa).

Positions 15, 35, 36, and 83 each coordinate NADPH. Residues K83 and G111 each contribute to the sn-glycerol 3-phosphate site. Position 115 (S115) interacts with NADPH. Positions 166, 219, 229, 230, and 231 each coordinate sn-glycerol 3-phosphate. K166 acts as the Proton acceptor in catalysis. An NADPH-binding site is contributed by R230. E256 serves as a coordination point for NADPH.

The protein belongs to the NAD-dependent glycerol-3-phosphate dehydrogenase family.

Its subcellular location is the cytoplasm. The enzyme catalyses sn-glycerol 3-phosphate + NAD(+) = dihydroxyacetone phosphate + NADH + H(+). The catalysed reaction is sn-glycerol 3-phosphate + NADP(+) = dihydroxyacetone phosphate + NADPH + H(+). Its pathway is membrane lipid metabolism; glycerophospholipid metabolism. Its function is as follows. Catalyzes the reduction of the glycolytic intermediate dihydroxyacetone phosphate (DHAP) to sn-glycerol 3-phosphate (G3P), the key precursor for phospholipid synthesis. The polypeptide is Glycerol-3-phosphate dehydrogenase [NAD(P)+] (Synechococcus elongatus (strain ATCC 33912 / PCC 7942 / FACHB-805) (Anacystis nidulans R2)).